We begin with the raw amino-acid sequence, 525 residues long: Bifunctional purine biosynthesis protein PurH (525 aa).

In terms of domain architecture, MGS-like spans 1 to 145 (MSNVERALIS…KNNASVGIVT (145 aa)).

This sequence belongs to the PurH family.

It carries out the reaction (6R)-10-formyltetrahydrofolate + 5-amino-1-(5-phospho-beta-D-ribosyl)imidazole-4-carboxamide = 5-formamido-1-(5-phospho-D-ribosyl)imidazole-4-carboxamide + (6S)-5,6,7,8-tetrahydrofolate. The enzyme catalyses IMP + H2O = 5-formamido-1-(5-phospho-D-ribosyl)imidazole-4-carboxamide. The protein operates within purine metabolism; IMP biosynthesis via de novo pathway; 5-formamido-1-(5-phospho-D-ribosyl)imidazole-4-carboxamide from 5-amino-1-(5-phospho-D-ribosyl)imidazole-4-carboxamide (10-formyl THF route): step 1/1. It functions in the pathway purine metabolism; IMP biosynthesis via de novo pathway; IMP from 5-formamido-1-(5-phospho-D-ribosyl)imidazole-4-carboxamide: step 1/1. The polypeptide is Bifunctional purine biosynthesis protein PurH (Alcanivorax borkumensis (strain ATCC 700651 / DSM 11573 / NCIMB 13689 / SK2)).